We begin with the raw amino-acid sequence, 49 residues long: Disintegrin eristostatin (49 aa).

A Disintegrin domain is found at 1–49; that stretch reads QEEPCATGPCCRRCKFKRAGKVCRVARGDWNDDYCTGKSCDCPKNPWNG. Intrachain disulfides connect Cys-5–Cys-14, Cys-10–Cys-35, Cys-11–Cys-40, and Cys-23–Cys-42. The Cell attachment site motif lies at 27–29; it reads RGD.

This sequence belongs to the venom metalloproteinase (M12B) family. P-II subfamily. P-IIa sub-subfamily. In terms of assembly, monomer. Expressed by the venom gland.

It is found in the secreted. Its function is as follows. Is a potent inhibitor of ADP-induced platelet aggregation. Acts by binding to alpha-IIb/beta-3 (ITGA2B/ITGB3) receptor on the platelet surface. Binds with the same high affinity to resting and activated platelets. Also binds the alpha-4/beta-1 (ITGA4/ITGB1) integrin. Is a potent inhibitor of human and murine melanoma metastases in mouse model systems, also due to the inhibition of binding between the alpha-4/beta-1 integrin and the vascular cell adhesion protein VCAM1. Reacts neither with the integrin alpha-V/beta-3 (ITGAV/ITGB3) vitronectin receptor nor with the integrin alpha-5/beta-1 (ITGA5/ITGB1) fibronectin receptor. Has no effect on cell proliferation or angiogenesis. Specifically inhibits cell migration on fibronectin, but not that on collagen IV or laminin. May involve fibronectin-binding integrins that mediate cell migration. This chain is Disintegrin eristostatin, found in Eristicophis macmahoni (Leaf-nosed viper).